A 273-amino-acid chain; its full sequence is Zinc finger protein 80 (273 aa).

Residues 49 to 71 (YKCKECGSVFNKNSLLVRHQQIH) form a C2H2-type 1 zinc finger. Residues 77 to 99 (YEYQECGKAFPEKVDFVRHMRIH) form a C2H2-type 2; degenerate zinc finger. The C2H2-type 3; atypical zinc-finger motif lies at 105-127 (CKCVECRKVFNRRSHLLCYRQIH). 4 C2H2-type zinc fingers span residues 133–155 (YECSECGKTFSYHSVFIQHRVTH), 161–183 (FGCKECGKTFYYNSSLTRHMKIH), 187–211 (KPCKCSECGKTFTYHSVFFRHSMTH), and 217–239 (YECKECGKGFYYSYSLTRHTRSH).

It belongs to the krueppel C2H2-type zinc-finger protein family.

Its subcellular location is the nucleus. Its function is as follows. May be involved in transcriptional regulation. The polypeptide is Zinc finger protein 80 (ZNF80) (Pan troglodytes (Chimpanzee)).